The following is a 513-amino-acid chain: Maturase K (513 aa).

It belongs to the intron maturase 2 family. MatK subfamily.

It is found in the plastid. The protein localises to the chloroplast. Functionally, usually encoded in the trnK tRNA gene intron. Probably assists in splicing its own and other chloroplast group II introns. This is Maturase K from Byblis liniflora (Carnivorous plant).